The chain runs to 350 residues: Uroporphyrinogen decarboxylase (350 aa).

Substrate is bound by residues 23-27 (RQAGR), Asp72, Tyr149, Ser204, and His318.

This sequence belongs to the uroporphyrinogen decarboxylase family. Homodimer.

The protein localises to the cytoplasm. It catalyses the reaction uroporphyrinogen III + 4 H(+) = coproporphyrinogen III + 4 CO2. Its pathway is porphyrin-containing compound metabolism; protoporphyrin-IX biosynthesis; coproporphyrinogen-III from 5-aminolevulinate: step 4/4. Its function is as follows. Catalyzes the decarboxylation of four acetate groups of uroporphyrinogen-III to yield coproporphyrinogen-III. The chain is Uroporphyrinogen decarboxylase from Carboxydothermus hydrogenoformans (strain ATCC BAA-161 / DSM 6008 / Z-2901).